Consider the following 314-residue polypeptide: Homoserine O-acetyltransferase (314 aa).

Residue cysteine 142 is the Acyl-thioester intermediate of the active site. Substrate-binding residues include lysine 163 and serine 192. Histidine 235 serves as the catalytic Proton acceptor. The active site involves glutamate 237. Position 249 (arginine 249) interacts with substrate.

This sequence belongs to the MetA family.

The protein localises to the cytoplasm. The enzyme catalyses L-homoserine + acetyl-CoA = O-acetyl-L-homoserine + CoA. It functions in the pathway amino-acid biosynthesis; L-methionine biosynthesis via de novo pathway; O-acetyl-L-homoserine from L-homoserine: step 1/1. In terms of biological role, transfers an acetyl group from acetyl-CoA to L-homoserine, forming acetyl-L-homoserine. The chain is Homoserine O-acetyltransferase from Streptococcus thermophilus (strain ATCC BAA-491 / LMD-9).